Here is a 76-residue protein sequence, read N- to C-terminus: ATP synthase subunit 9, mitochondrial (76 aa).

The next 2 membrane-spanning stretches (helical) occupy residues 13 to 35 (GIST…ALIQ) and 50 to 72 (FAIL…SFLL).

Belongs to the ATPase C chain family. F-type ATPases have 2 components, CF(1) - the catalytic core - and CF(0) - the membrane proton channel. In yeast, the dimeric form of ATP synthase consists of 18 polypeptides: alpha, beta, gamma, delta, epsilon, 4 (B), 5 (OSCP), 6 (A), 8, 9 (C), d, E (Tim11), f, g, h, i, j and k.

Its subcellular location is the mitochondrion membrane. In terms of biological role, mitochondrial membrane ATP synthase (F(1)F(0) ATP synthase or Complex V) produces ATP from ADP in the presence of a proton gradient across the membrane which is generated by electron transport complexes of the respiratory chain. F-type ATPases consist of two structural domains, F(1) - containing the extramembraneous catalytic core and F(0) - containing the membrane proton channel, linked together by a central stalk and a peripheral stalk. During catalysis, ATP synthesis in the catalytic domain of F(1) is coupled via a rotary mechanism of the central stalk subunits to proton translocation. Part of the complex F(0) domain. A homomeric c-ring of probably 10 subunits is part of the complex rotary element. This is ATP synthase subunit 9, mitochondrial (ATP9) from Eremothecium gossypii (strain ATCC 10895 / CBS 109.51 / FGSC 9923 / NRRL Y-1056) (Yeast).